Reading from the N-terminus, the 32-residue chain is MNSEKQSRQWAHGADMVVGQLEAQGVKQVFGI.

The protein belongs to the TPP enzyme family. Homodimer.

It catalyses the reaction 2 pyruvate + H(+) = (2S)-2-acetolactate + CO2. It functions in the pathway polyol metabolism; (R,R)-butane-2,3-diol biosynthesis; (R,R)-butane-2,3-diol from pyruvate: step 1/3. The protein is Acetolactate synthase, catabolic (budB) of Klebsiella aerogenes (Enterobacter aerogenes).